The chain runs to 123 residues: Large ribosomal subunit protein uL29 (123 aa).

The residue at position 19 (K19) is an N6-acetyllysine. A Glycyl lysine isopeptide (Lys-Gly) (interchain with G-Cter in SUMO2) cross-link involves residue K25. A Phosphoserine modification is found at S29. At K43 the chain carries N6-acetyllysine. The tract at residues 100-123 (EKLKTKKQQRKERLYPLRKYAVKA) is disordered.

This sequence belongs to the universal ribosomal protein uL29 family. As to quaternary structure, component of the large ribosomal subunit.

The protein resides in the cytoplasm. Its function is as follows. Component of the large ribosomal subunit. The ribosome is a large ribonucleoprotein complex responsible for the synthesis of proteins in the cell. The sequence is that of Large ribosomal subunit protein uL29 (Rpl35) from Mus musculus (Mouse).